Reading from the N-terminus, the 305-residue chain is GTPase Era (305 aa).

Residues 11 to 181 (RSGFISFVGR…LDVITRLLPE (171 aa)) enclose the Era-type G domain. The G1 stretch occupies residues 19-26 (GRPNTGKS). Residue 19–26 (GRPNTGKS) participates in GTP binding. A G2 region spans residues 45-49 (ETTRH). Positions 66-69 (DTPG) are G3. GTP-binding positions include 66–70 (DTPGL) and 130–133 (TKVD). The tract at residues 130-133 (TKVD) is G4. The segment at 160-162 (VSA) is G5. One can recognise a KH type-2 domain in the interval 212–291 (LKDELPHSVA…YLDLRIKVLK (80 aa)).

It belongs to the TRAFAC class TrmE-Era-EngA-EngB-Septin-like GTPase superfamily. Era GTPase family. In terms of assembly, monomer.

It localises to the cytoplasm. The protein resides in the cell membrane. An essential GTPase that binds both GDP and GTP, with rapid nucleotide exchange. Plays a role in 16S rRNA processing and 30S ribosomal subunit biogenesis and possibly also in cell cycle regulation and energy metabolism. The protein is GTPase Era of Corynebacterium diphtheriae (strain ATCC 700971 / NCTC 13129 / Biotype gravis).